Here is an 840-residue protein sequence, read N- to C-terminus: Axin-2 (840 aa).

The tract at residues 1–75 is disordered; it reads MSSAVLVTLL…EGRASPDSPL (75 aa). Residues 21–30 carry the Tankyrase-binding motif motif; the sequence is APRPPVPGEE. The segment covering 42–55 has biased composition (polar residues); that stretch reads KVQSTKPMPVSSNA. Over residues 56 to 69 the composition is skewed to basic and acidic residues; it reads RRNEDGLGEPEGRA. The RGS domain occupies 81–200; the sequence is SLHSLLGDQD…LTSDIYLEYV (120 aa). 5 disordered regions span residues 300–363, 398–435, 447–485, 572–614, and 715–745; these read SELS…KEMT, IRED…EEDP, LKTP…LLPT, RGGT…GDRS, and ASQQ…EDHK. The span at 303-318 shows a compositional bias: low complexity; that stretch reads SSDALTDDSMSMTDSS. The interval 327-413 is interaction with GSK3B; it reads MGSKKQLQRE…KEGSEQALSS (87 aa). The interaction with beta-catenin stretch occupies residues 413-478; the sequence is SRDGAPVQHP…HHHQHHHHQQ (66 aa). Over residues 468–478 the composition is skewed to basic residues; that stretch reads DHHHQHHHHQQ. Positions 758–840 constitute a DIX domain; the sequence is ASELVVTYFF…RILGKVERID (83 aa).

As to quaternary structure, interacts with glycogen synthase kinase-3 beta (GSK3B) and beta-catenin. The interaction between axin and beta-catenin occurs via the armadillo repeats contained in beta-catenin. Interacts with SMAD7 and RNF111. Interacts with ANKRD6. Interacts with SIAH1. Interacts with SIAH2. In terms of processing, ADP-ribosylated by tankyrase TNKS and TNKS2. Poly-ADP-ribosylated protein is recognized by RNF146, followed by ubiquitination and subsequent activation of the Wnt signaling pathway. Ubiquitinated by RNF146 when poly-ADP-ribosylated, leading to its degradation and subsequent activation of the Wnt signaling pathway. Deubiquitinated by USP34, deubiquitinated downstream of beta-catenin stabilization step: deubiquitination is important Wnt signaling to positively regulate beta-catenin (CTNBB1)-mediated transcription. Post-translationally, probably phosphorylated by GSK3B and dephosphorylated by PP2A. Expressed in Tcf7-positive innate-like T-cells (at protein level).

It is found in the cytoplasm. Inhibitor of the Wnt signaling pathway. Down-regulates beta-catenin. Probably facilitate the phosphorylation of beta-catenin and APC by GSK3B. The protein is Axin-2 of Mus musculus (Mouse).